A 321-amino-acid polypeptide reads, in one-letter code: Carnitine monooxygenase reductase subunit (321 aa).

Residues 4-109 (YQMFEVQVSQ…STPNNLFALI (106 aa)) enclose the FAD-binding FR-type domain. One can recognise a 2Fe-2S ferredoxin-type domain in the interval 233-321 (DAFTLVLARS…AKGKRLVLDL (89 aa)). [2Fe-2S] cluster-binding residues include C270, C275, C278, and C308.

It belongs to the PDR/VanB family. CntB subfamily. As to quaternary structure, composed of an oxygenase subunit (yeaW) and a reductase subunit (yeaX). It depends on FMN as a cofactor. The cofactor is [2Fe-2S] cluster.

The catalysed reaction is (R)-carnitine + NADH + O2 + H(+) = (3R)-3-hydroxy-4-oxobutanoate + trimethylamine + NAD(+) + H2O. It catalyses the reaction (R)-carnitine + NADPH + O2 + H(+) = (3R)-3-hydroxy-4-oxobutanoate + trimethylamine + NADP(+) + H2O. It functions in the pathway amine and polyamine metabolism; carnitine metabolism. Converts carnitine to trimethylamine and malic semialdehyde. Can also use gamma-butyrobetaine, choline and betaine as substrates. This Escherichia coli (strain K12) protein is Carnitine monooxygenase reductase subunit (yeaX).